The following is a 398-amino-acid chain: Argininosuccinate synthase (398 aa).

8 to 16 contributes to the ATP binding site; sequence AYSGGLDTS. L-citrulline is bound at residue Tyr-87. Gly-117 is a binding site for ATP. Thr-119, Asn-123, and Asp-124 together coordinate L-aspartate. An L-citrulline-binding site is contributed by Asn-123. L-citrulline contacts are provided by Arg-127, Ser-175, Glu-260, and Tyr-272.

This sequence belongs to the argininosuccinate synthase family. Type 1 subfamily. Homotetramer.

It localises to the cytoplasm. The enzyme catalyses L-citrulline + L-aspartate + ATP = 2-(N(omega)-L-arginino)succinate + AMP + diphosphate + H(+). The protein operates within amino-acid biosynthesis; L-arginine biosynthesis; L-arginine from L-ornithine and carbamoyl phosphate: step 2/3. This is Argininosuccinate synthase from Mycobacterium marinum (strain ATCC BAA-535 / M).